The sequence spans 408 residues: Arginine biosynthesis bifunctional protein ArgJ (408 aa).

Positions 156, 182, 193, 279, 403, and 408 each coordinate substrate. The Nucleophile role is filled by threonine 193.

It belongs to the ArgJ family. Heterotetramer of two alpha and two beta chains.

The protein localises to the cytoplasm. The enzyme catalyses N(2)-acetyl-L-ornithine + L-glutamate = N-acetyl-L-glutamate + L-ornithine. It carries out the reaction L-glutamate + acetyl-CoA = N-acetyl-L-glutamate + CoA + H(+). It participates in amino-acid biosynthesis; L-arginine biosynthesis; L-ornithine and N-acetyl-L-glutamate from L-glutamate and N(2)-acetyl-L-ornithine (cyclic): step 1/1. It functions in the pathway amino-acid biosynthesis; L-arginine biosynthesis; N(2)-acetyl-L-ornithine from L-glutamate: step 1/4. Its function is as follows. Catalyzes two activities which are involved in the cyclic version of arginine biosynthesis: the synthesis of N-acetylglutamate from glutamate and acetyl-CoA as the acetyl donor, and of ornithine by transacetylation between N(2)-acetylornithine and glutamate. The chain is Arginine biosynthesis bifunctional protein ArgJ from Bordetella bronchiseptica (strain ATCC BAA-588 / NCTC 13252 / RB50) (Alcaligenes bronchisepticus).